Consider the following 176-residue polypeptide: Magnetosome protein MamT (176 aa).

At 1–11 (MSMEAPRRGRR) the chain is on the cytoplasmic side. The helical transmembrane segment at 12–30 (WVSLGMIALLAAIGLGLYW) threads the bilayer. Over 31-176 (DQLSTPSGIT…DKKGGMRWQL (146 aa)) the chain is Lumenal. Residues 89 to 109 (VKPGTGMPHPYVGDCIQCHLM) carry the MCR (magnetochrome) 1 motif. Residues C103, C106, H107, C154, C157, and H158 each coordinate heme. Positions 140-160 (ILPTSRQPHPPAGRCIKCHDI) match the MCR 2 motif.

This sequence belongs to the magnetosome MamT family. Requires heme as cofactor.

Its subcellular location is the magnetosome membrane. In terms of biological role, may play a role in magnetite crystal maturation. May transfer electrons to balance the Fe(2+)-Fe(3+) ratio during magnetite formation. This is Magnetosome protein MamT (mamT) from Paramagnetospirillum magneticum (strain ATCC 700264 / AMB-1) (Magnetospirillum magneticum).